We begin with the raw amino-acid sequence, 335 residues long: Glycerol-3-phosphate dehydrogenase [NAD(P)+] (335 aa).

The NADPH site is built by S12, W13, H33, R34, and K108. Sn-glycerol 3-phosphate is bound by residues K108, G137, and T139. A141 is a binding site for NADPH. Residues K192, D245, S255, R256, and N257 each coordinate sn-glycerol 3-phosphate. K192 functions as the Proton acceptor in the catalytic mechanism. R256 lines the NADPH pocket. E282 contacts NADPH.

It belongs to the NAD-dependent glycerol-3-phosphate dehydrogenase family.

Its subcellular location is the cytoplasm. It catalyses the reaction sn-glycerol 3-phosphate + NAD(+) = dihydroxyacetone phosphate + NADH + H(+). The enzyme catalyses sn-glycerol 3-phosphate + NADP(+) = dihydroxyacetone phosphate + NADPH + H(+). Its pathway is membrane lipid metabolism; glycerophospholipid metabolism. Its function is as follows. Catalyzes the reduction of the glycolytic intermediate dihydroxyacetone phosphate (DHAP) to sn-glycerol 3-phosphate (G3P), the key precursor for phospholipid synthesis. This is Glycerol-3-phosphate dehydrogenase [NAD(P)+] from Methylococcus capsulatus (strain ATCC 33009 / NCIMB 11132 / Bath).